We begin with the raw amino-acid sequence, 195 residues long: Small ribosomal subunit protein eS1 (195 aa).

It belongs to the eukaryotic ribosomal protein eS1 family.

The sequence is that of Small ribosomal subunit protein eS1 from Methanothermobacter thermautotrophicus (strain ATCC 29096 / DSM 1053 / JCM 10044 / NBRC 100330 / Delta H) (Methanobacterium thermoautotrophicum).